Reading from the N-terminus, the 70-residue chain is Bowman-Birk type proteinase inhibitor A7 (70 aa).

4 disulfides stabilise this stretch: Cys-12/Cys-31, Cys-18/Cys-29, Cys-38/Cys-45, and Cys-42/Cys-59.

The protein belongs to the Bowman-Birk serine protease inhibitor family. As to expression, expressed in bulb (at protein level).

Its function is as follows. Serine protease inhibitor. Strongly inhibits trypsin (Ki = 7.1 nM) and almost completely inhibits elastase. Also inhibits chymotrypsin (Ki = 19 nM). Does not inhibit bacterial subtilisin. This Hyacinthus orientalis (Common hyacinth) protein is Bowman-Birk type proteinase inhibitor A7.